The chain runs to 118 residues: Cytochrome b-c1 complex subunit 7 (118 aa).

Residues 1 to 32 form an igE-binding. Immunodominant epitope; induces specific IgE antibody production in mice. Causes degranulation of rat basophilic leukemia (RBL) cells and the release of beta-hexosaminidase from them region; that stretch reads MVHLTKTLRFINNPGFRKFYYGLQGYNKYGLY.

The protein belongs to the UQCRB/QCR7 family. As to quaternary structure, component of the ubiquinol-cytochrome c oxidoreductase (cytochrome b-c1 complex, complex III, CIII), a multisubunit enzyme composed of 3 respiratory subunits cytochrome b, cytochrome c1 and Rieske protein, 2 core protein subunits, and additional low-molecular weight protein subunits. The complex exists as an obligatory dimer and forms supercomplexes (SCs) in the inner mitochondrial membrane with cytochrome c oxidase (complex IV, CIV).

It is found in the mitochondrion inner membrane. Functionally, component of the ubiquinol-cytochrome c oxidoreductase, a multisubunit transmembrane complex that is part of the mitochondrial electron transport chain which drives oxidative phosphorylation. The respiratory chain contains 3 multisubunit complexes succinate dehydrogenase (complex II, CII), ubiquinol-cytochrome c oxidoreductase (cytochrome b-c1 complex, complex III, CIII) and cytochrome c oxidase (complex IV, CIV), that cooperate to transfer electrons derived from NADH and succinate to molecular oxygen, creating an electrochemical gradient over the inner membrane that drives transmembrane transport and the ATP synthase. The cytochrome b-c1 complex catalyzes electron transfer from ubiquinol to cytochrome c, linking this redox reaction to translocation of protons across the mitochondrial inner membrane, with protons being carried across the membrane as hydrogens on the quinol. In the process called Q cycle, 2 protons are consumed from the matrix, 4 protons are released into the intermembrane space and 2 electrons are passed to cytochrome c. This is Cytochrome b-c1 complex subunit 7 from Dermatophagoides farinae (American house dust mite).